Consider the following 166-residue polypeptide: Large ribosomal subunit protein uL10 (166 aa).

It belongs to the universal ribosomal protein uL10 family. As to quaternary structure, part of the ribosomal stalk of the 50S ribosomal subunit. The N-terminus interacts with L11 and the large rRNA to form the base of the stalk. The C-terminus forms an elongated spine to which L12 dimers bind in a sequential fashion forming a multimeric L10(L12)X complex.

Functionally, forms part of the ribosomal stalk, playing a central role in the interaction of the ribosome with GTP-bound translation factors. The sequence is that of Large ribosomal subunit protein uL10 from Bacillus licheniformis (strain ATCC 14580 / DSM 13 / JCM 2505 / CCUG 7422 / NBRC 12200 / NCIMB 9375 / NCTC 10341 / NRRL NRS-1264 / Gibson 46).